We begin with the raw amino-acid sequence, 2151 residues long: Calpain-type cysteine protease DEK1 (2151 aa).

The N-terminal stretch at 1-32 is a signal peptide; it reads MEGDERGVLLACVISGTLFTVFGSGSFWILWA. The Extracellular portion of the chain corresponds to 33–69; it reads VNWRPWRLYSWIFARKWPKVLQGPQLDILCGVLSLFA. The chain crosses the membrane as a helical span at residues 70-90; that stretch reads WIVVVSPIAILIGWGSWLIVI. The Cytoplasmic segment spans residues 91 to 94; sequence LDRH. Residues 95-115 form a helical membrane-spanning segment; it reads IIGLAIIMAGTALLLAFYSIM. At 116–126 the chain is on the extracellular side; it reads LWWRTQWQSSR. The chain crosses the membrane as a helical span at residues 127–147; sequence AVALLLLLGVALLCAYELCAV. Residues 148-163 lie on the Cytoplasmic side of the membrane; the sequence is YVTAGAHASQQYSPSG. Residues 164 to 184 form a helical membrane-spanning segment; sequence FFFGVSAIALAINMLFICRMV. The Extracellular portion of the chain corresponds to 185–235; that stretch reads FNGNGLDVDEYVRRAYKFAYSDCIEVGPVACLPEPPDPNELYPRQTSRASH. A helical transmembrane segment spans residues 236–256; it reads LGLLYLGSLVVLLAYSVLYGL. Residues 257 to 263 are Cytoplasmic-facing; the sequence is TARESRW. Residues 264–284 form a helical membrane-spanning segment; that stretch reads LGGITSAAVIVLDWNIGACLY. Over 285–293 the chain is Extracellular; that stretch reads GFKLLQNRV. Residues 294–314 traverse the membrane as a helical segment; it reads LALFVAGISRLFLICFGIHYW. At 315–319 the chain is on the cytoplasmic side; the sequence is YLGHC. The chain crosses the membrane as a helical span at residues 320 to 340; the sequence is ISYIFVASVLSGAAVSRHLSI. The Extracellular segment spans residues 341-615; sequence TDPSAARRDA…LLLHHVAGTP (275 aa). Disordered regions lie at residues 363 to 393 and 405 to 442; these read RRKE…GHTG and CTAD…SCRS. A compositionally biased stretch (low complexity) spans 369 to 388; the sequence is SSSSSSDGCGSSIKRSSSID. A compositionally biased stretch (polar residues) spans 405–420; it reads CTADNLTRTGSSQEGI. Low complexity predominate over residues 430–442; that stretch reads RPSLGLRSSSCRS. Residues 616–636 form a helical membrane-spanning segment; sequence ERAWGLFSLVFILETIIVAIF. Over 637-652 the chain is Cytoplasmic; that stretch reads RPKTITIINSSHQQFE. Residues 653–673 traverse the membrane as a helical segment; the sequence is FGFSVLLLSPVVCSIMAFLRS. Topologically, residues 674-686 are extracellular; the sequence is LQVEEMALTSKSR. Residues 687 to 707 traverse the membrane as a helical segment; that stretch reads KYGFVAWLLSTSVGLSLSFLS. Topologically, residues 708-711 are cytoplasmic; that stretch reads KSSV. Residues 712-732 traverse the membrane as a helical segment; sequence LLGISLTVPLMAACLSIAVPI. Over 733-760 the chain is Extracellular; the sequence is WMHNGYQFWVPQLSCGDQARDLRSPRIK. A helical transmembrane segment spans residues 761-782; it reads GFILWICVVLFAGSVISLGAII. The Cytoplasmic portion of the chain corresponds to 783–813; that stretch reads SAKPLDDLKYKLFSARENNVTSPYTSSVYLG. The chain crosses the membrane as a helical span at residues 814-834; it reads WAMSSGIALVVTAILPIVSWF. Residues 835 to 844 are Extracellular-facing; sequence ATYRFSHSSA. Residues 845 to 865 traverse the membrane as a helical segment; sequence VCLMIFSVVLVAFCGTSYLEV. Topologically, residues 866–878 are cytoplasmic; it reads VKSRDDQLPTKGD. The chain crosses the membrane as a helical span at residues 879-899; sequence FLAALLPLACIPALLSLCCGM. The Extracellular segment spans residues 900 to 912; that stretch reads VKWKDDCWILSRG. The helical transmembrane segment at 913–933 threads the bilayer; that stretch reads VYVFFSIGLLLLFGAIAAVIA. Residues 934 to 936 lie on the Cytoplasmic side of the membrane; sequence VKP. Residues 937 to 957 form a helical membrane-spanning segment; sequence WTIGVSFLLVLFLMVVTIGVI. At 958–971 the chain is on the extracellular side; that stretch reads HLWASNNFYLTRKQ. A helical membrane pass occupies residues 972 to 992; sequence TSFVCFLALLLGLAAFLLGWH. Topologically, residues 993–1006 are cytoplasmic; that stretch reads QDKAFAGASVGYFT. Residues 1007-1027 traverse the membrane as a helical segment; that stretch reads FLSLLAGRALAVLLSPPIVVY. Over 1028–1050 the chain is Extracellular; that stretch reads SPRVLPVYVYDAHADCGKNVSAA. The helical transmembrane segment at 1051-1071 threads the bilayer; it reads FLVLYGIALATEGWGVVASLI. Topologically, residues 1072–2151 are cytoplasmic; that stretch reads IYPPFAGAAV…TKASIVLEAL (1080 aa). Calpain catalytic domains follow at residues 1407-1600 and 1695-1997; these read SGKH…DMID and QFTD…CRVY. Catalysis depends on residues Cys-1761, His-1919, and Asn-1939.

It belongs to the peptidase C2 family. Post-translationally, autocatalytic proteolytic cleavage leading to the production of mainly cytoplasmic localized subproducts of about 85 and 120 kDa. Mostly expressed in meristems and organ primordia. Expressed at low levels in young and germinating seeds at 10 ppm and in seedling roots at 67 ppm. Present in most tissues at a low level.

The protein resides in the cell membrane. The protein localises to the endosome membrane. It is found in the endoplasmic reticulum membrane. It localises to the cytoplasm. Functionally, essential protease involved in epiderm development. Required for aleurone cell development in the endosperm probably by maintaining and restricting the aleurone and embryonic epidermal L1 cell-layer fates as well as meristems organization. Involved in the maintenance of adaxial/abaxial axis information in developing leaves, probably by regulating cell proliferation and expansion. Does not need calcium ions to be active. Required for the formation of giant cells in sepals by determining cell fate and promoting endoreplication. The protein is Calpain-type cysteine protease DEK1 of Arabidopsis thaliana (Mouse-ear cress).